Reading from the N-terminus, the 564-residue chain is 4-hydroxy-7-methoxy-3-oxo-3,4-dihydro-2H-1,4-benzoxazin-2-yl glucoside beta-D-glucosidase 1d, chloroplastic (564 aa).

The N-terminal 50 residues, 1–50 (MALLAAATLNPTTHLSLRSRAGRNSENLWLRSAASSQKSKGRFCNLTVRA), are a transit peptide targeting the chloroplast. A beta-D-glucoside contacts are provided by residues Q92, H194, and 239-240 (NE). Residue E240 is the Proton donor of the active site. Cysteines 259 and 265 form a disulfide. Residues Y383, E456, W504, 511 to 512 (EW), and F520 contribute to the a beta-D-glucoside site. E456 (nucleophile) is an active-site residue.

The protein belongs to the glycosyl hydrolase 1 family. As to quaternary structure, homo- and heterohexamers. In terms of tissue distribution, expressed in young seedlings early after germination.

The protein localises to the plastid. Its subcellular location is the chloroplast. The enzyme catalyses Hydrolysis of terminal, non-reducing beta-D-glucosyl residues with release of beta-D-glucose.. It carries out the reaction DIMBOA beta-D-glucoside + H2O = DIMBOA + D-glucose. The catalysed reaction is DIBOA beta-D-glucoside + H2O = DIBOA + D-glucose. In terms of biological role, acts in defense of young plant parts against pests via the production of hydroxamic acids from hydroxamic acid glucosides. Enzymatic activity is highly correlated with plant growth. The preferred substrate is DIMBOA-beta-D-glucoside. This is 4-hydroxy-7-methoxy-3-oxo-3,4-dihydro-2H-1,4-benzoxazin-2-yl glucoside beta-D-glucosidase 1d, chloroplastic (GLU1D) from Triticum aestivum (Wheat).